A 387-amino-acid polypeptide reads, in one-letter code: 3-ketoacyl-CoA thiolase (387 aa).

C91 functions as the Acyl-thioester intermediate in the catalytic mechanism. Active-site proton acceptor residues include H343 and C373.

This sequence belongs to the thiolase-like superfamily. Thiolase family. As to quaternary structure, heterotetramer of two alpha chains (FadB) and two beta chains (FadA).

Its subcellular location is the cytoplasm. The enzyme catalyses an acyl-CoA + acetyl-CoA = a 3-oxoacyl-CoA + CoA. It functions in the pathway lipid metabolism; fatty acid beta-oxidation. Catalyzes the final step of fatty acid oxidation in which acetyl-CoA is released and the CoA ester of a fatty acid two carbons shorter is formed. Involved in the aerobic and anaerobic degradation of long-chain fatty acids. The protein is 3-ketoacyl-CoA thiolase of Escherichia coli O6:H1 (strain CFT073 / ATCC 700928 / UPEC).